Here is a 122-residue protein sequence, read N- to C-terminus: Selenoprotein H (122 aa).

Lysine 20 is subject to N6-acetyllysine. Residues cysteine 41–selenocysteine 44 constitute a cross-link (cysteinyl-selenocysteine (Cys-Sec); redox-active). A non-standard amino acid (selenocysteine) is located at residue selenocysteine 44.

The protein belongs to the SelWTH family.

Functionally, may be involved in a redox-related process. This Macaca fascicularis (Crab-eating macaque) protein is Selenoprotein H.